The primary structure comprises 156 residues: Longistatin (156 aa).

The signal sequence occupies residues 1-21 (MTHRRLLWALCVAALLGVVAA). EF-hand domains are found at residues 70–105 (SQDE…TNHH) and 123–156 (DIAS…TNQI). The Ca(2+) site is built by D83, D85, N87, K89, E94, D135, N137, D139, F141, and E146.

Interacts with host fibrin. Interacts with human RAGE/AGER. Saliva (at protein level). Salivary gland (at protein level). Not detected in midgut, ovary, trachea, Malpighian tubule system, synganglion and cuticle.

Its subcellular location is the secreted. The protein localises to the cytoplasm. With respect to regulation, resistant to inhibition by host SERPINE1. Inhibited by PMSF, aprotinin, antipain and leupeptin. Inhibited by Zn(2+). Anticoagulant and fibrinolytic protease that modulates blood feeding of ticks on vertebrate hosts. Degrades host fibrinogen and delays fibrin clot formation. Promotes lysis of fibrin clots in the host by activating host plasminogen in the presence of soluble fibrin. Binds Ca(2+). Hydrolyzes serine protease-specific substrates. Required for the formation of a blood pool, an accumulation of blood and tissue fluid developed at the tick's feeding site. Blocks activation of host AGER/RAGE. Reduces AGER/RAGE-dependent production of reactive oxygen species (ROS) in human endothelial cells. Prevents AGER/RAGE-dependent activation of NF-kappa-B and suppresses expression of adhesion molecules, such as VCAM1, ICAM1 and SELE, and secretion of cytokines, such as CSF3/GCSF and TGF-beta, in human endothelial cells. Suppresses RAGE/AGER-mediated migration of mouse peritoneal resident cells. Reduces AGER/RAGE-mediated inflammation in mice tissues. This chain is Longistatin, found in Haemaphysalis longicornis (Bush tick).